A 270-amino-acid polypeptide reads, in one-letter code: Lipopolysaccharide core biosynthesis glycosyltransferase LpsC (270 aa).

It belongs to the glycosyltransferase 2 family. WaaE/KdtX subfamily.

The protein operates within bacterial outer membrane biogenesis; LPS core biosynthesis. This Rhizobium meliloti (strain 1021) (Ensifer meliloti) protein is Lipopolysaccharide core biosynthesis glycosyltransferase LpsC (lpsC).